Reading from the N-terminus, the 145-residue chain is D-aminoacyl-tRNA deacylase (145 aa).

The short motif at 137–138 is the Gly-cisPro motif, important for rejection of L-amino acids element; that stretch reads GP.

It belongs to the DTD family. In terms of assembly, homodimer.

The protein resides in the cytoplasm. The catalysed reaction is glycyl-tRNA(Ala) + H2O = tRNA(Ala) + glycine + H(+). It catalyses the reaction a D-aminoacyl-tRNA + H2O = a tRNA + a D-alpha-amino acid + H(+). Its function is as follows. An aminoacyl-tRNA editing enzyme that deacylates mischarged D-aminoacyl-tRNAs. Also deacylates mischarged glycyl-tRNA(Ala), protecting cells against glycine mischarging by AlaRS. Acts via tRNA-based rather than protein-based catalysis; rejects L-amino acids rather than detecting D-amino acids in the active site. By recycling D-aminoacyl-tRNA to D-amino acids and free tRNA molecules, this enzyme counteracts the toxicity associated with the formation of D-aminoacyl-tRNA entities in vivo and helps enforce protein L-homochirality. The protein is D-aminoacyl-tRNA deacylase of Shewanella baltica (strain OS155 / ATCC BAA-1091).